The primary structure comprises 238 residues: Ribonuclease PH (238 aa).

Phosphate-binding positions include R86 and 124-126; that span reads GTR.

It belongs to the RNase PH family. In terms of assembly, homohexameric ring arranged as a trimer of dimers.

It catalyses the reaction tRNA(n+1) + phosphate = tRNA(n) + a ribonucleoside 5'-diphosphate. Functionally, phosphorolytic 3'-5' exoribonuclease that plays an important role in tRNA 3'-end maturation. Removes nucleotide residues following the 3'-CCA terminus of tRNAs; can also add nucleotides to the ends of RNA molecules by using nucleoside diphosphates as substrates, but this may not be physiologically important. Probably plays a role in initiation of 16S rRNA degradation (leading to ribosome degradation) during starvation. This Haemophilus influenzae (strain PittEE) protein is Ribonuclease PH.